A 125-amino-acid polypeptide reads, in one-letter code: Calcitonin receptor-stimulating peptide 3 (125 aa).

The signal sequence occupies residues 1–25 (MGFWKFPPFLILSILVLYQAGMLHA). Positions 26–79 (APFRMALGSSFDSATLTEEEMSLLLVAMVKDYVQMKATVLEQETEDFSITTQER) are excised as a propeptide. C81 and C86 are joined by a disulfide. A Leucine amide modification is found at L116. Residues 122–125 (QPQA) constitute a propeptide that is removed on maturation.

This sequence belongs to the calcitonin family. In terms of tissue distribution, mainly expressed in the thyroid gland and CNS. Found in the nerve cells of cerebrum, hippocampus, hypothalamus, pons/midbrain and thalamus.

It is found in the secreted. The sequence is that of Calcitonin receptor-stimulating peptide 3 (CRSP3) from Sus scrofa (Pig).